The following is a 112-amino-acid chain: Small ribosomal subunit protein bS6c (112 aa).

This sequence belongs to the bacterial ribosomal protein bS6 family.

It localises to the plastid. It is found in the chloroplast. Its function is as follows. Binds together with bS18 to 16S ribosomal RNA. The protein is Small ribosomal subunit protein bS6c (rps6) of Porphyra purpurea (Red seaweed).